Consider the following 363-residue polypeptide: Pyrimidine monooxygenase RutA (363 aa).

FMN contacts are provided by residues 49-50 (IK), Asn115, Glu124, 140-141 (RY), and Ser190.

It belongs to the NtaA/SnaA/DszA monooxygenase family. RutA subfamily.

It carries out the reaction uracil + FMNH2 + NADH + O2 = (Z)-3-ureidoacrylate + FMN + NAD(+) + H2O + H(+). The enzyme catalyses thymine + FMNH2 + NADH + O2 = (Z)-2-methylureidoacrylate + FMN + NAD(+) + H2O + H(+). Catalyzes the pyrimidine ring opening between N-3 and C-4 by an unusual flavin hydroperoxide-catalyzed mechanism, adding oxygen atoms in the process to yield ureidoacrylate peracid, that immediately reacts with FMN forming ureidoacrylate and FMN-N(5)-oxide. The FMN-N(5)-oxide reacts spontaneously with NADH to produce FMN. Requires the flavin reductase RutF to regenerate FMN in vivo. This is Pyrimidine monooxygenase RutA from Escherichia coli O157:H7 (strain EC4115 / EHEC).